Here is a 231-residue protein sequence, read N- to C-terminus: Large ribosomal subunit protein uL1 (231 aa).

It belongs to the universal ribosomal protein uL1 family. As to quaternary structure, part of the 50S ribosomal subunit.

In terms of biological role, binds directly to 23S rRNA. The L1 stalk is quite mobile in the ribosome, and is involved in E site tRNA release. Protein L1 is also a translational repressor protein, it controls the translation of the L11 operon by binding to its mRNA. This is Large ribosomal subunit protein uL1 from Mycoplasmopsis synoviae (strain 53) (Mycoplasma synoviae).